We begin with the raw amino-acid sequence, 389 residues long: Tubulin-like protein CetZ3 (389 aa).

GTP is bound by residues 10-14 (QAGGK), 110-112 (GTG), Glu-142, Asn-169, and Asn-187.

The protein belongs to the CetZ family.

It localises to the cytoplasm. Functionally, involved in cell shape control. The protein is Tubulin-like protein CetZ3 of Haloferax volcanii (strain ATCC 29605 / DSM 3757 / JCM 8879 / NBRC 14742 / NCIMB 2012 / VKM B-1768 / DS2) (Halobacterium volcanii).